Here is a 172-residue protein sequence, read N- to C-terminus: Putative phosphoesterase BCG9842_B4061 (172 aa).

His-34 functions as the Proton donor in the catalytic mechanism. 2 short sequence motifs (HXTX) span residues 34-37 (HITL) and 115-118 (HLTI). The Proton acceptor role is filled by His-115.

The protein belongs to the 2H phosphoesterase superfamily. YjcG family.

The polypeptide is Putative phosphoesterase BCG9842_B4061 (Bacillus cereus (strain G9842)).